The following is a 243-amino-acid chain: Ubiquinone/menaquinone biosynthesis C-methyltransferase UbiE (243 aa).

S-adenosyl-L-methionine-binding positions include T69, D90, and D116 to A117.

Belongs to the class I-like SAM-binding methyltransferase superfamily. MenG/UbiE family.

It catalyses the reaction a 2-demethylmenaquinol + S-adenosyl-L-methionine = a menaquinol + S-adenosyl-L-homocysteine + H(+). It carries out the reaction a 2-methoxy-6-(all-trans-polyprenyl)benzene-1,4-diol + S-adenosyl-L-methionine = a 5-methoxy-2-methyl-3-(all-trans-polyprenyl)benzene-1,4-diol + S-adenosyl-L-homocysteine + H(+). Its pathway is quinol/quinone metabolism; menaquinone biosynthesis; menaquinol from 1,4-dihydroxy-2-naphthoate: step 2/2. It participates in cofactor biosynthesis; ubiquinone biosynthesis. Methyltransferase required for the conversion of demethylmenaquinol (DMKH2) to menaquinol (MKH2) and the conversion of 2-polyprenyl-6-methoxy-1,4-benzoquinol (DDMQH2) to 2-polyprenyl-3-methyl-6-methoxy-1,4-benzoquinol (DMQH2). The polypeptide is Ubiquinone/menaquinone biosynthesis C-methyltransferase UbiE (Paraburkholderia phymatum (strain DSM 17167 / CIP 108236 / LMG 21445 / STM815) (Burkholderia phymatum)).